The sequence spans 554 residues: Rab GTPase-binding effector protein 2 (554 aa).

3 disordered regions span residues 1–28 (MAAA…SELS), 167–208 (IQRR…GPAA), and 371–395 (GLRA…DEAL). The segment covering 14 to 28 (PQEKQKDASESSELS) has biased composition (basic and acidic residues). A coiled-coil region spans residues 15 to 173 (QEKQKDASES…IQEIQRRPRQ (159 aa)). Phosphoserine is present on residues S176, S180, S187, and S191. Positions 274 to 509 (DSQWEQLQVE…QAELETSEQV (236 aa)) form a coiled coil.

Belongs to the rabaptin family. In terms of assembly, heterodimer with RABGEF1. The dimer binds RAB5A that has been activated by GTP-binding. Interacts with SDCCAG8; this interaction is important for ciliogenesis regulation. Interacts with RAB4A; this interaction may mediate VEGFR2 cell surface expression.

It is found in the cytoplasm. The protein localises to the early endosome. The protein resides in the cytoskeleton. It localises to the microtubule organizing center. Its subcellular location is the centrosome. It is found in the cilium basal body. Its function is as follows. Plays a role in membrane trafficking and in homotypic early endosome fusion. Participates in arteriogenesis by regulating vascular endothelial growth factor receptor 2/VEGFR2 cell surface expression and endosomal trafficking. By interacting with SDCCAG8, localizes to centrosomes and plays a critical role in ciliogenesis. In Mus musculus (Mouse), this protein is Rab GTPase-binding effector protein 2 (Rabep2).